A 57-amino-acid polypeptide reads, in one-letter code: Large ribosomal subunit protein bL32A (57 aa).

The protein belongs to the bacterial ribosomal protein bL32 family.

The sequence is that of Large ribosomal subunit protein bL32A (rpmF1) from Streptomyces coelicolor (strain ATCC BAA-471 / A3(2) / M145).